Here is a 128-residue protein sequence, read N- to C-terminus: MAPVKKTVTKGSKKKKQLLKFTLDCTHPVEDGIMDAANFEQFLHDRIKVNGKVGNLGGGVVSIERSKSKITVSSEVPFSKRYLKYLTKKYLKKNNLRDWLRVVANSKESYELRYFQINQDEEEEEDED.

Belongs to the eukaryotic ribosomal protein eL22 family. Component of the large ribosomal subunit.

It localises to the cytoplasm. In terms of biological role, component of the large ribosomal subunit. The ribosome is a large ribonucleoprotein complex responsible for the synthesis of proteins in the cell. This Xenopus tropicalis (Western clawed frog) protein is Large ribosomal subunit protein eL22 (rpl22).